A 425-amino-acid chain; its full sequence is uncharacterized protein (425 aa).

Residues 55 to 181 (RYAHSLGVYE…DLDTDRMDYL (127 aa)) form the HD domain.

This is an uncharacterized protein from Mycoplasma genitalium (strain ATCC 33530 / DSM 19775 / NCTC 10195 / G37) (Mycoplasmoides genitalium).